Consider the following 209-residue polypeptide: Small ribosomal subunit protein uS3 (209 aa).

A KH type-2 domain is found at 38 to 107; it reads IRKIIKNKYY…RVVINIEEIK (70 aa).

This sequence belongs to the universal ribosomal protein uS3 family. Part of the 30S ribosomal subunit. Forms a tight complex with proteins S10 and S14.

Its function is as follows. Binds the lower part of the 30S subunit head. Binds mRNA in the 70S ribosome, positioning it for translation. The polypeptide is Small ribosomal subunit protein uS3 (Thermotoga maritima (strain ATCC 43589 / DSM 3109 / JCM 10099 / NBRC 100826 / MSB8)).